The chain runs to 199 residues: Large ribosomal subunit protein bL9 (199 aa).

Over residues 149–166 (AEAERINRGEDINSRQED) the composition is skewed to basic and acidic residues. The tract at residues 149 to 199 (AEAERINRGEDINSRQEDQDAAAEAIAAAGEFFDPEAQDETPETEAASEQQ) is disordered. A compositionally biased stretch (acidic residues) spans 181 to 191 (FDPEAQDETPE).

This sequence belongs to the bacterial ribosomal protein bL9 family.

Binds to the 23S rRNA. This Afipia carboxidovorans (strain ATCC 49405 / DSM 1227 / KCTC 32145 / OM5) (Oligotropha carboxidovorans) protein is Large ribosomal subunit protein bL9.